A 476-amino-acid chain; its full sequence is Glutathione synthetase (476 aa).

Arginine 117 serves as a coordination point for substrate. ATP is bound at residue glutamate 137. Mg(2+) contacts are provided by glutamate 137 and asparagine 139. Substrate contacts are provided by residues 141-144 (ISSS), 211-213 (ERN), glutamine 217, and 267-270 (RAGY). ATP is bound by residues lysine 308, 367–376 (KPQREGGGNN), tyrosine 378, 400–403 (MDKI), and glutamate 426. Glutamate 371 provides a ligand contact to Mg(2+). Arginine 452 provides a ligand contact to substrate. Positions 454 and 460 each coordinate ATP. 463 to 464 (VA) contacts substrate.

Belongs to the eukaryotic GSH synthase family. Homodimer. It depends on Mg(2+) as a cofactor.

It catalyses the reaction gamma-L-glutamyl-L-cysteine + glycine + ATP = glutathione + ADP + phosphate + H(+). It functions in the pathway sulfur metabolism; glutathione biosynthesis; glutathione from L-cysteine and L-glutamate: step 2/2. In Dictyostelium discoideum (Social amoeba), this protein is Glutathione synthetase (gshB).